Reading from the N-terminus, the 448-residue chain is Exodeoxyribonuclease 7 large subunit (448 aa).

Belongs to the XseA family. Heterooligomer composed of large and small subunits.

It localises to the cytoplasm. It carries out the reaction Exonucleolytic cleavage in either 5'- to 3'- or 3'- to 5'-direction to yield nucleoside 5'-phosphates.. Its function is as follows. Bidirectionally degrades single-stranded DNA into large acid-insoluble oligonucleotides, which are then degraded further into small acid-soluble oligonucleotides. The chain is Exodeoxyribonuclease 7 large subunit from Shewanella sp. (strain ANA-3).